A 280-amino-acid polypeptide reads, in one-letter code: uncharacterized protein (280 aa).

Residues 96–208 form the DUF1279 domain; sequence DKSIGIFQRF…GYLSTPPPVK (113 aa). A helical membrane pass occupies residues 115–135; sequence VMVPVHIVTSTVWFGSFYYAA. The stretch at 207 to 274 forms a coiled coil; the sequence is VKEFLQDKME…KLQETKDKMS (68 aa). The segment at 245–280 is disordered; that stretch reads SERMEETKERFSETKDKFSEKLQETKDKMSFRKKAD.

Its subcellular location is the membrane. This is an uncharacterized protein from Danio rerio (Zebrafish).